Here is a 508-residue protein sequence, read N- to C-terminus: Photosystem II CP47 reaction center protein (508 aa).

6 helical membrane passes run 21 to 36 (SVHI…WAGS), 101 to 115 (IVFS…IWHW), 140 to 156 (GIHL…FGAF), 203 to 218 (IAAG…FHLS), 237 to 252 (VLSS…AFVV), and 457 to 472 (SFAL…HGAR).

It belongs to the PsbB/PsbC family. PsbB subfamily. As to quaternary structure, PSII is composed of 1 copy each of membrane proteins PsbA, PsbB, PsbC, PsbD, PsbE, PsbF, PsbH, PsbI, PsbJ, PsbK, PsbL, PsbM, PsbT, PsbX, PsbY, PsbZ, Psb30/Ycf12, at least 3 peripheral proteins of the oxygen-evolving complex and a large number of cofactors. It forms dimeric complexes. Binds multiple chlorophylls. PSII binds additional chlorophylls, carotenoids and specific lipids. is required as a cofactor.

The protein localises to the plastid. It localises to the chloroplast thylakoid membrane. Functionally, one of the components of the core complex of photosystem II (PSII). It binds chlorophyll and helps catalyze the primary light-induced photochemical processes of PSII. PSII is a light-driven water:plastoquinone oxidoreductase, using light energy to abstract electrons from H(2)O, generating O(2) and a proton gradient subsequently used for ATP formation. This Arabis hirsuta (Hairy rock-cress) protein is Photosystem II CP47 reaction center protein.